We begin with the raw amino-acid sequence, 140 residues long: Small ribosomal subunit protein bS16 (140 aa).

Residues 86–140 (TVGKAKQAAKREEEAKQAAKEAAEAKAAAEAEAAAAAEAAKAEDAPDGETESSEG) are disordered. Over residues 94 to 114 (AKREEEAKQAAKEAAEAKAAA) the composition is skewed to basic and acidic residues. Residues 115–124 (EAEAAAAAEA) show a composition bias toward low complexity. Acidic residues predominate over residues 130 to 140 (APDGETESSEG).

The protein belongs to the bacterial ribosomal protein bS16 family.

The chain is Small ribosomal subunit protein bS16 from Parasynechococcus marenigrum (strain WH8102).